Here is a 558-residue protein sequence, read N- to C-terminus: NXPE family member 2 (558 aa).

Residues 17–37 traverse the membrane as a helical segment; it reads ASARKLFLIVLIIFVFWVVFM.

The protein belongs to the NXPE family.

The protein resides in the membrane. This is NXPE family member 2 (Nxpe2) from Mus musculus (Mouse).